The chain runs to 226 residues: Urease accessory protein UreF (226 aa).

The protein belongs to the UreF family. UreD, UreF and UreG form a complex that acts as a GTP-hydrolysis-dependent molecular chaperone, activating the urease apoprotein by helping to assemble the nickel containing metallocenter of UreC. The UreE protein probably delivers the nickel.

It localises to the cytoplasm. In terms of biological role, required for maturation of urease via the functional incorporation of the urease nickel metallocenter. This is Urease accessory protein UreF from Paraburkholderia xenovorans (strain LB400).